We begin with the raw amino-acid sequence, 241 residues long: DnaA regulatory inactivator Hda (241 aa).

It belongs to the DnaA family. HdA subfamily. In terms of assembly, the active form seems to be an ADP-bound monomer. Forms the RIDA complex (regulatory inactivation of DnaA) of ATP-DnaA, ADP-Hda and the DNA-loaded beta sliding clamp (dnaN).

Its function is as follows. Mediates the interaction of DNA replication initiator protein DnaA with DNA polymerase subunit beta sliding clamp (dnaN). Stimulates hydrolysis of ATP-DnaA to ADP-DnaA, rendering DnaA inactive for reinitiation, a process called regulatory inhibition of DnaA or RIDA. The polypeptide is DnaA regulatory inactivator Hda (Salmonella arizonae (strain ATCC BAA-731 / CDC346-86 / RSK2980)).